The following is a 294-amino-acid chain: Factor associated with metabolism and energy (294 aa).

Positions 1–12 (MGLGHSKAHPRV) are enriched in basic residues. 2 disordered regions span residues 1-28 (MGLGHSKAHPRVIKVTPLQSQETETPST) and 255-279 (FWDSSSSDSDELEKDERRPQALVRT). The N-myristoyl glycine moiety is linked to residue Gly-2. Positions 17–28 (PLQSQETETPST) are enriched in polar residues. Basic and acidic residues predominate over residues 268 to 279 (KDERRPQALVRT).

As to expression, expressed in proximal tubules of the kidney.

It localises to the cell membrane. The protein localises to the cytoplasmic vesicle. Functionally, may be involved in tuning the metabolism, energy expenditure, and excretion processes. This chain is Factor associated with metabolism and energy, found in Mus musculus (Mouse).